The sequence spans 213 residues: MLTTEKYQGLNWSKNHGLIPAIIQHSISGEVLMLGYMNQESMAITEKTGYVTFFSRSKNRLWIKGESSGNVLKLINWYPDCDFDSLLILVLPQGFTCHKNTNSCFHPALTDFSFLFQLENIISIKKNHTSSHGNQQSSYTSDLYTSGIERIAQKVGEEGLETALAAVSRNSKSLIDEASDLIYHLLVLLQHESLNFHDVIQELRVRSKLKKKH.

Residues 1–114 (MLTTEKYQGL…FHPALTDFSF (114 aa)) form a phosphoribosyl-AMP cyclohydrolase region. Residues 115 to 213 (LFQLENIISI…RVRSKLKKKH (99 aa)) are phosphoribosyl-ATP pyrophosphohydrolase.

In the N-terminal section; belongs to the PRA-CH family. The protein in the C-terminal section; belongs to the PRA-PH family.

The protein localises to the cytoplasm. The enzyme catalyses 1-(5-phospho-beta-D-ribosyl)-ATP + H2O = 1-(5-phospho-beta-D-ribosyl)-5'-AMP + diphosphate + H(+). It catalyses the reaction 1-(5-phospho-beta-D-ribosyl)-5'-AMP + H2O = 1-(5-phospho-beta-D-ribosyl)-5-[(5-phospho-beta-D-ribosylamino)methylideneamino]imidazole-4-carboxamide. The protein operates within amino-acid biosynthesis; L-histidine biosynthesis; L-histidine from 5-phospho-alpha-D-ribose 1-diphosphate: step 2/9. Its pathway is amino-acid biosynthesis; L-histidine biosynthesis; L-histidine from 5-phospho-alpha-D-ribose 1-diphosphate: step 3/9. This is Histidine biosynthesis bifunctional protein HisIE from Blochmanniella floridana.